The sequence spans 70 residues: MSERIKQLMVKRGITIEELSRETMIDMQTLNKIIEMPDESDVTTIKLIALVLNVSIDELLDEKGGEDNAK.

Positions 5-59 (IKQLMVKRGITIEELSRETMIDMQTLNKIIEMPDESDVTTIKLIALVLNVSIDEL) constitute an HTH cro/C1-type domain. Positions 16 to 35 (IEELSRETMIDMQTLNKIIE) form a DNA-binding region, H-T-H motif.

This Bacillus subtilis (strain 168) protein is SPbeta prophage-derived uncharacterized HTH-type transcriptional regulator YopO (yopO).